A 157-amino-acid polypeptide reads, in one-letter code: Small ribosomal subunit protein uS7 (157 aa).

Belongs to the universal ribosomal protein uS7 family. As to quaternary structure, part of the 30S ribosomal subunit. Contacts proteins S9 and S11.

Its function is as follows. One of the primary rRNA binding proteins, it binds directly to 16S rRNA where it nucleates assembly of the head domain of the 30S subunit. Is located at the subunit interface close to the decoding center, probably blocks exit of the E-site tRNA. This is Small ribosomal subunit protein uS7 from Chloroflexus aurantiacus (strain ATCC 29366 / DSM 635 / J-10-fl).